A 681-amino-acid polypeptide reads, in one-letter code: Kojibiose hydrolase (681 aa).

Residues M1–S23 form the signal peptide. Beta-D-glucose-binding residues include R74, W343, D344, W391, E392, T407, E472, W473, K538, Q539, and D573. E472 functions as the Proton donor in the catalytic mechanism. The Proton acceptor role is filled by E616.

Belongs to the glycosyl hydrolase 65 family. In terms of assembly, homohexamer; dimer of trimers.

Its subcellular location is the periplasm. It carries out the reaction kojibiose + H2O = beta-D-glucose + D-glucose. Functionally, glycosidase that specifically hydrolyzes kojibiose to beta-glucose and glucose. Also hydrolyzes, with lower catalytic efficiency, longer kojioligosaccharides (from kojitriose to kojipentaose) and shorter oligosaccharides produced by the degradation of dextran-containing alpha-1,2 branches. Probably acts on alpha-(1-&gt;2)-glucosyl isomaltooligosaccharides. Shows weak activity with nigerose but has no activity toward p-nitrophenyl alpha-glucopyranoside, which is a general substrate of exo-acting alpha-glucoside hydrolases. Has a strict specificity for alpha-1,2-glucosidic linkages. Catalyzes the hydrolytic reaction via an anomer-inverting mechanism. The sequence is that of Kojibiose hydrolase from Flavobacterium johnsoniae (strain ATCC 17061 / DSM 2064 / JCM 8514 / BCRC 14874 / CCUG 350202 / NBRC 14942 / NCIMB 11054 / UW101) (Cytophaga johnsonae).